The sequence spans 184 residues: 3-hydroxyanthranilate 3,4-dioxygenase (184 aa).

Position 44 (arginine 44) interacts with O2. Residues histidine 48, glutamate 54, and histidine 92 each contribute to the Fe cation site. Glutamate 54 is a substrate binding site. Positions 96 and 106 each coordinate substrate. Positions 121, 126, 162, and 165 each coordinate a divalent metal cation.

This sequence belongs to the 3-HAO family. Requires Fe(2+) as cofactor.

The protein localises to the cytoplasm. The catalysed reaction is 3-hydroxyanthranilate + O2 = (2Z,4Z)-2-amino-3-carboxymuconate 6-semialdehyde. The protein operates within cofactor biosynthesis; NAD(+) biosynthesis; quinolinate from L-kynurenine: step 3/3. In terms of biological role, catalyzes the oxidative ring opening of 3-hydroxyanthranilate to 2-amino-3-carboxymuconate semialdehyde, which spontaneously cyclizes to quinolinate. The polypeptide is 3-hydroxyanthranilate 3,4-dioxygenase (Pyricularia oryzae (strain 70-15 / ATCC MYA-4617 / FGSC 8958) (Rice blast fungus)).